The chain runs to 171 residues: Zinc uptake regulation protein (171 aa).

This sequence belongs to the Fur family.

Acts as a negative controlling element, employing Zn(2+) as a cofactor to bind the operator of the repressed genes (znuACB). This chain is Zinc uptake regulation protein (zur), found in Escherichia coli (strain K12).